The sequence spans 139 residues: Large ribosomal subunit protein uL16 (139 aa).

Belongs to the universal ribosomal protein uL16 family. Part of the 50S ribosomal subunit.

Binds 23S rRNA and is also seen to make contacts with the A and possibly P site tRNAs. This chain is Large ribosomal subunit protein uL16, found in Koribacter versatilis (strain Ellin345).